A 41-amino-acid chain; its full sequence is Photosystem II reaction center protein Y (41 aa).

N-formylmethionine is present on M1. The Lumenal segment spans residues 1–4 (MDWR). The helical transmembrane segment at 5–23 (VLVVLLPVLLAAGWAVRNI) threads the bilayer. The Cytoplasmic portion of the chain corresponds to 24-41 (LPYAVKQVQKLLQKAKAA).

This sequence belongs to the PsbY family. In terms of assembly, PSII is composed of 1 copy each of membrane proteins PsbA, PsbB, PsbC, PsbD, PsbE, PsbF, PsbH, PsbI, PsbJ, PsbK, PsbL, PsbM, PsbT, PsbX, PsbY, PsbZ, Psb30/Ycf12, peripheral proteins PsbO, CyanoQ (PsbQ), PsbU, PsbV and a large number of cofactors. It forms dimeric complexes. This protein is only loosely associated with PSII, and is not often found in crystals. Found on the exterior of the PSII dimer, near cytochrome b559 (psbE and psbF). Requires PSII binds multiple chlorophylls, carotenoids and specific lipids. as cofactor.

It localises to the cellular thylakoid membrane. In terms of biological role, loosely associated component of the core of photosystem II, it is not always seen in crystals. PSII is a light-driven water plastoquinone oxidoreductase, using light energy to abstract electrons from H(2)O, generating a proton gradient subsequently used for ATP formation. The polypeptide is Photosystem II reaction center protein Y (Thermosynechococcus vestitus (strain NIES-2133 / IAM M-273 / BP-1)).